Reading from the N-terminus, the 213-residue chain is Regulatory protein RecX (213 aa).

It belongs to the RecX family.

The protein localises to the cytoplasm. In terms of biological role, modulates RecA activity. In Clostridium beijerinckii (strain ATCC 51743 / NCIMB 8052) (Clostridium acetobutylicum), this protein is Regulatory protein RecX.